We begin with the raw amino-acid sequence, 301 residues long: Epimerase family protein Mb2239 (301 aa).

The protein belongs to the NAD(P)-dependent epimerase/dehydratase family. SDR39U1 subfamily.

This is Epimerase family protein Mb2239 from Mycobacterium bovis (strain ATCC BAA-935 / AF2122/97).